The following is a 312-amino-acid chain: Olfactory receptor 2L5 (312 aa).

At 1–24 (MENYNQTSTDFILLGLFPPSKIGL) the chain is on the extracellular side. Asn-5 is a glycosylation site (N-linked (GlcNAc...) asparagine). A helical transmembrane segment spans residues 25-48 (FLFILFVLIFLMALIGNLSMILLI). Topologically, residues 49-56 (FLDTHLHT) are cytoplasmic. The helical transmembrane segment at 57–78 (PMYFLLSQLSLIDLNYISTIVP) threads the bilayer. Topologically, residues 79–99 (KMASDFLYGNKSISFIGCGIQ) are extracellular. A disulfide bridge connects residues Cys-96 and Cys-188. Residues 100–119 (SFFFMTFAGAEALLLTSMAY) form a helical membrane-spanning segment. Residues 120–138 (DRYVAICFPLHYPIRMSKR) are Cytoplasmic-facing. Residues 139–157 (MYVLMITGSWMIGSINSCA) traverse the membrane as a helical segment. Residues 158 to 194 (HTVYAFRIPYCKSRAINHFFCDVPAMLTLACTDTWVY) are Extracellular-facing. A helical membrane pass occupies residues 195–218 (EYTVFLSSTIFLVFPFTGIACSYG). Residues 219–235 (WVLLAVYRMHSAEGRKK) lie on the Cytoplasmic side of the membrane. A helical membrane pass occupies residues 236 to 258 (AYSTCSTHLTVVTFYYAPFAYTY). The Extracellular portion of the chain corresponds to 259–271 (LCPRSLRSLTEDK). A helical transmembrane segment spans residues 272-291 (VLAVFYTILTPMLNPIIYSL). The Cytoplasmic segment spans residues 292 to 312 (RNKEVMGALTRVIQNIFSVKM).

Belongs to the G-protein coupled receptor 1 family.

The protein localises to the cell membrane. In terms of biological role, odorant receptor. This Homo sapiens (Human) protein is Olfactory receptor 2L5 (OR2L5).